A 505-amino-acid polypeptide reads, in one-letter code: Deoxyguanosinetriphosphate triphosphohydrolase (505 aa).

The HD domain occupies 66-273 (RLTHSMEVQQ…MEAADDISYC (208 aa)).

It belongs to the dGTPase family. Type 1 subfamily. Homotetramer. It depends on Mg(2+) as a cofactor.

The enzyme catalyses dGTP + H2O = 2'-deoxyguanosine + triphosphate + H(+). Its function is as follows. dGTPase preferentially hydrolyzes dGTP over the other canonical NTPs. The chain is Deoxyguanosinetriphosphate triphosphohydrolase from Salmonella enteritidis PT4 (strain P125109).